A 255-amino-acid chain; its full sequence is Ribonuclease HII (255 aa).

Residues Ala72 to Leu255 form the RNase H type-2 domain. Residues Asp78, Glu79, and Asp170 each contribute to the a divalent metal cation site.

This sequence belongs to the RNase HII family. It depends on Mn(2+) as a cofactor. The cofactor is Mg(2+).

The protein localises to the cytoplasm. It catalyses the reaction Endonucleolytic cleavage to 5'-phosphomonoester.. Its function is as follows. Endonuclease that specifically degrades the RNA of RNA-DNA hybrids. The polypeptide is Ribonuclease HII (Staphylococcus aureus (strain MSSA476)).